Consider the following 303-residue polypeptide: MDPEVTLLLQCPGGGLPQEQIQAELSPAHDRRPLPGGDEAITAIWETRLKAQPWLFDAPKFRLHSATLAPIGSRGPQLLLRLGLTSYRDFLGTNWSSSAAWLRQQGATDWGDTQAYLADPLGVGAALATADDFLVFLRRSRQVAEAPGLVDVPGGHPEPQALCPGGSPQHQDLAGQLVVHELFSSVLQEICDEVNLPLLTLSQPLLLGIARNETSAGRASAEFYVQCSLTSEQVRKHYLSGGPEAHESTGIFFVETQNVQRLLETEMWAELCPSAKGAIILYNRVQGSPTGAALGSPALLPPL.

Phenylalanine 56, tyrosine 87, arginine 139, alanine 144, aspartate 151, histidine 156, and glutamate 158 together coordinate substrate. Residues 118-285 (ADPLGVGAAL…KGAIILYNRV (168 aa)) form the Nudix hydrolase domain. Residues 148–168 (GLVDVPGGHPEPQALCPGGSP) form a disordered region. Residues 175–196 (GQLVVHELFSSVLQEICDEVNL) carry the Nudix box motif. Mg(2+) contacts are provided by glutamate 189 and glutamate 193. Serine 274 is a binding site for substrate.

It belongs to the Nudix hydrolase family. It depends on Mg(2+) as a cofactor.

It catalyses the reaction UDP-sugar + H2O = UMP + alpha-D-aldose 1-phosphate.. Functionally, hydrolyzes UDP-glucose to glucose 1-phosphate and UMP and UDP-galactose to galactose 1-phosphate and UMP. Preferred substrate is UDP-glucose. This chain is Uridine diphosphate glucose pyrophosphatase NUDT22 (NUDT22), found in Homo sapiens (Human).